The following is a 238-amino-acid chain: uncharacterized protein (238 aa).

A helical transmembrane segment spans residues 10–33 (TLLALMISLSLSSLLLLSISHFYV).

The protein localises to the membrane. This is an uncharacterized protein from Haemophilus influenzae (strain ATCC 51907 / DSM 11121 / KW20 / Rd).